A 237-amino-acid chain; its full sequence is Small ribosomal subunit protein uS3 (237 aa).

The KH type-2 domain occupies 39-107 (VRQFLTKELK…PAQINISEVR (69 aa)).

Belongs to the universal ribosomal protein uS3 family. In terms of assembly, part of the 30S ribosomal subunit. Forms a tight complex with proteins S10 and S14.

Functionally, binds the lower part of the 30S subunit head. Binds mRNA in the 70S ribosome, positioning it for translation. The polypeptide is Small ribosomal subunit protein uS3 (Aeromonas hydrophila subsp. hydrophila (strain ATCC 7966 / DSM 30187 / BCRC 13018 / CCUG 14551 / JCM 1027 / KCTC 2358 / NCIMB 9240 / NCTC 8049)).